Reading from the N-terminus, the 1362-residue chain is DNA-directed RNA polymerase subunit beta' (1362 aa).

Residues Met-1–Lys-14 are compositionally biased toward basic residues. A disordered region spans residues Met-1–Asn-39. The span at Ala-15–Ser-27 shows a compositional bias: low complexity. Cys-248, Cys-315, Cys-322, and Cys-325 together coordinate Zn(2+). A disordered region spans residues Thr-1316–Asp-1336.

It belongs to the RNA polymerase beta' chain family. RpoC2 subfamily. In terms of assembly, in cyanobacteria the RNAP catalytic core is composed of 2 alpha, 1 beta, 1 beta', 1 gamma and 1 omega subunit. When a sigma factor is associated with the core the holoenzyme is formed, which can initiate transcription. It depends on Zn(2+) as a cofactor.

The enzyme catalyses RNA(n) + a ribonucleoside 5'-triphosphate = RNA(n+1) + diphosphate. Its function is as follows. DNA-dependent RNA polymerase catalyzes the transcription of DNA into RNA using the four ribonucleoside triphosphates as substrates. This chain is DNA-directed RNA polymerase subunit beta', found in Synechococcus sp. (strain CC9605).